The primary structure comprises 371 residues: Carbamoyl phosphate synthase small chain (371 aa).

A CPSase region spans residues 1–182 (MGVHKKGYLV…KNPIVHTPKN (182 aa)). Ser49, Gly235, and Gly237 together coordinate L-glutamine. The Glutamine amidotransferase type-1 domain maps to 186 to 371 (RVVVLDLGVK…EFVKILEGRK (186 aa)). Cys263 serves as the catalytic Nucleophile. L-glutamine is bound by residues Leu264, Gln267, Asn305, Gly307, and Tyr308. Catalysis depends on residues His346 and Glu348.

This sequence belongs to the CarA family. In terms of assembly, composed of two chains; the small (or glutamine) chain promotes the hydrolysis of glutamine to ammonia, which is used by the large (or ammonia) chain to synthesize carbamoyl phosphate. Tetramer of heterodimers (alpha,beta)4.

The catalysed reaction is hydrogencarbonate + L-glutamine + 2 ATP + H2O = carbamoyl phosphate + L-glutamate + 2 ADP + phosphate + 2 H(+). It carries out the reaction L-glutamine + H2O = L-glutamate + NH4(+). It participates in amino-acid biosynthesis; L-arginine biosynthesis; carbamoyl phosphate from bicarbonate: step 1/1. It functions in the pathway pyrimidine metabolism; UMP biosynthesis via de novo pathway; (S)-dihydroorotate from bicarbonate: step 1/3. In terms of biological role, small subunit of the glutamine-dependent carbamoyl phosphate synthetase (CPSase). CPSase catalyzes the formation of carbamoyl phosphate from the ammonia moiety of glutamine, carbonate, and phosphate donated by ATP, constituting the first step of 2 biosynthetic pathways, one leading to arginine and/or urea and the other to pyrimidine nucleotides. The small subunit (glutamine amidotransferase) binds and cleaves glutamine to supply the large subunit with the substrate ammonia. This Pyrococcus furiosus (strain ATCC 43587 / DSM 3638 / JCM 8422 / Vc1) protein is Carbamoyl phosphate synthase small chain.